The sequence spans 266 residues: Norfluorocurarine synthase 2 (266 aa).

In terms of domain architecture, AB hydrolase-1 spans 11–121; that stretch reads HFVLVHGAGH…VMPDSTHPPN (111 aa). Active-site residues include Ser-86, Asp-216, and His-244.

This sequence belongs to the AB hydrolase superfamily. In terms of assembly, homodimer.

It catalyses the reaction 17-dehydropreakuammicine + H2O = norfluorocurarine + methanol + CO2. It functions in the pathway alkaloid biosynthesis. Its function is as follows. Hydrolase involved in the biosynthesis of curare monoterpene indole alkaloids (MIAs), natural products such as diaboline, a pharmacologically active compound used to regulate blood pressure. Curare alkaloids act as animal glycine receptor antagonists. Catalyzes the conversion of dehydropreakuammicine to norfluorocurarine. The polypeptide is Norfluorocurarine synthase 2 (Strychnos sp).